A 251-amino-acid polypeptide reads, in one-letter code: Capsid protein (251 aa).

Residues 3-20 (KRDAPWRLTAGTAKISRT) carry the Bipartite nuclear localization signal motif. The Nuclear localization signal motif lies at 35–49 (RASAWVNRPMYRKPR). A zinc finger lies at 63–80 (CEGPCKVQSFEQRHDVSH). Positions 96-117 (ITHRVGKRFCVKSVYILGKIWM) match the Nuclear export signal motif. The Bipartite nuclear localization signal signature appears at 195–242 (RRFWKVNNHVVYNHQEAGKYENHTENALLLYMACTHASNPVYATLKIR).

Belongs to the geminiviridae capsid protein family. In terms of assembly, homomultimer. Binds to single-stranded and double-stranded viral DNA. Interacts (via nuclear localization signals) with host importin alpha-1a.

It is found in the virion. The protein localises to the host nucleus. In terms of biological role, encapsidates the viral DNA into characteristic twinned ('geminate') particles. Binds the genomic viral ssDNA and shuttles it into and out of the cell nucleus. The CP of bipartite geminiviruses is not required for cell-to-cell or systemic movement. The chain is Capsid protein from Capsicum annuum (Capsicum pepper).